A 207-amino-acid chain; its full sequence is ATP-dependent Clp protease proteolytic subunit (207 aa).

Ser111 functions as the Nucleophile in the catalytic mechanism. The active site involves His136.

The protein belongs to the peptidase S14 family. Fourteen ClpP subunits assemble into 2 heptameric rings which stack back to back to give a disk-like structure with a central cavity, resembling the structure of eukaryotic proteasomes. Component of the ClpAP and ClpXP complexes.

The protein localises to the cytoplasm. The enzyme catalyses Hydrolysis of proteins to small peptides in the presence of ATP and magnesium. alpha-casein is the usual test substrate. In the absence of ATP, only oligopeptides shorter than five residues are hydrolyzed (such as succinyl-Leu-Tyr-|-NHMec, and Leu-Tyr-Leu-|-Tyr-Trp, in which cleavage of the -Tyr-|-Leu- and -Tyr-|-Trp bonds also occurs).. Its function is as follows. Cleaves peptides in various proteins in a process that requires ATP hydrolysis. Has a chymotrypsin-like activity. Plays a major role in the degradation of misfolded proteins. In Escherichia coli O139:H28 (strain E24377A / ETEC), this protein is ATP-dependent Clp protease proteolytic subunit.